The primary structure comprises 1079 residues: DNA-directed RNA polymerase subunit beta (1079 aa).

Residues 963-982 (RSTGPYSRVTQQPVKGRARR) form a disordered region. Residues 966 to 975 (GPYSRVTQQP) are compositionally biased toward polar residues.

Belongs to the RNA polymerase beta chain family. In terms of assembly, in plastids the minimal PEP RNA polymerase catalytic core is composed of four subunits: alpha, beta, beta', and beta''. When a (nuclear-encoded) sigma factor is associated with the core the holoenzyme is formed, which can initiate transcription.

It localises to the plastid. The protein resides in the chloroplast. It catalyses the reaction RNA(n) + a ribonucleoside 5'-triphosphate = RNA(n+1) + diphosphate. In terms of biological role, DNA-dependent RNA polymerase catalyzes the transcription of DNA into RNA using the four ribonucleoside triphosphates as substrates. This is DNA-directed RNA polymerase subunit beta from Pelargonium hortorum (Common geranium).